Here is a 267-residue protein sequence, read N- to C-terminus: Glutamate racemase (267 aa).

Residues 10 to 11 (DS) and 42 to 43 (YG) each bind substrate. Cys-73 functions as the Proton donor/acceptor in the catalytic mechanism. 74-75 (NT) contacts substrate. Cys-183 serves as the catalytic Proton donor/acceptor. A substrate-binding site is contributed by 184 to 185 (TH).

The protein belongs to the aspartate/glutamate racemases family.

The enzyme catalyses L-glutamate = D-glutamate. It participates in cell wall biogenesis; peptidoglycan biosynthesis. Provides the (R)-glutamate required for cell wall biosynthesis. In Lactobacillus helveticus (strain DPC 4571), this protein is Glutamate racemase.